Reading from the N-terminus, the 107-residue chain is Large ribosomal subunit protein uL24 (107 aa).

It belongs to the universal ribosomal protein uL24 family. Part of the 50S ribosomal subunit.

One of two assembly initiator proteins, it binds directly to the 5'-end of the 23S rRNA, where it nucleates assembly of the 50S subunit. In terms of biological role, one of the proteins that surrounds the polypeptide exit tunnel on the outside of the subunit. The sequence is that of Large ribosomal subunit protein uL24 from Thermoanaerobacter pseudethanolicus (strain ATCC 33223 / 39E) (Clostridium thermohydrosulfuricum).